The following is a 329-amino-acid chain: Indolepyruvate C-methyltransferase (329 aa).

The protein belongs to the methyltransferase superfamily.

It catalyses the reaction indole-3-pyruvate + S-adenosyl-L-methionine = (R)-3-(indol-3-yl)-2-oxobutanoate + S-adenosyl-L-homocysteine + H(+). Strongly inhibited by the thiol reagents p-chloromercuribenzoate and N-ethylmaleimide. Partially inhibited by o-phenanthroline and 2,2'-dipyridyl. Competitively inhibited by L-tryptophan and indolmycin. Involved in the biosynthesis of the antibiotic indolmycin, an inhibitor of the bacterial tryptophan-tRNA synthetases. Catalyzes the transfer of a methyl group from S-adenosyl-L-methionine to position 3 of the aliphatic side chain of (indol-3-yl)pyruvate to yield 3-methylindolepyruvate. The protein is Indolepyruvate C-methyltransferase of Streptomyces griseus.